We begin with the raw amino-acid sequence, 170 residues long: Inducible metalloproteinase inhibitor protein (170 aa).

The N-terminal stretch at Met1 to Ser19 is a signal peptide. N-linked (GlcNAc...) asparagine glycosylation is found at Asn48 and Asn149.

In terms of processing, cleaved. Five disulfide bonds are present. When artificially cleaved by thermolysin between Asn-56 and Ile-57, the two obtained chains (called heavy and light chains) remain linked. Post-translationally, the N-terminus is blocked.

In terms of biological role, inhibits thermolysin, bacillolysin and pseudolysin, B.polymyxa metalloprotease and human MMP1 and MMP3. No activity on trypsin or cysteine protease papain. The polypeptide is Inducible metalloproteinase inhibitor protein (IMPI) (Galleria mellonella (Greater wax moth)).